The following is a 211-amino-acid chain: FMN-dependent NADH:quinone oxidoreductase (211 aa).

FMN contacts are provided by residues serine 10 and 16-18; that span reads STS.

The protein belongs to the azoreductase type 1 family. As to quaternary structure, homodimer. The cofactor is FMN.

The enzyme catalyses 2 a quinone + NADH + H(+) = 2 a 1,4-benzosemiquinone + NAD(+). It catalyses the reaction N,N-dimethyl-1,4-phenylenediamine + anthranilate + 2 NAD(+) = 2-(4-dimethylaminophenyl)diazenylbenzoate + 2 NADH + 2 H(+). Its function is as follows. Quinone reductase that provides resistance to thiol-specific stress caused by electrophilic quinones. Also exhibits azoreductase activity. Catalyzes the reductive cleavage of the azo bond in aromatic azo compounds to the corresponding amines. In Frankia casuarinae (strain DSM 45818 / CECT 9043 / HFP020203 / CcI3), this protein is FMN-dependent NADH:quinone oxidoreductase.